The following is a 290-amino-acid chain: 4-hydroxybenzoate octaprenyltransferase (290 aa).

Helical transmembrane passes span 41–61, 89–109, 133–153, 158–178, 202–224, and 269–289; these read WPLVAIFALGTLLMRSAGCAM, WEAVAIAAVLSFVAFLLILPL, FFAIPQAYLGIAFGFGIPMAF, GTVPALAWVMLVANVFWSVAY, FGRFDVAAIMLCYAVTLGIYAWI, and WLGGVLFAGIAAHYLVAGAAG.

This sequence belongs to the UbiA prenyltransferase family. Mg(2+) serves as cofactor.

It is found in the cell inner membrane. The catalysed reaction is all-trans-octaprenyl diphosphate + 4-hydroxybenzoate = 4-hydroxy-3-(all-trans-octaprenyl)benzoate + diphosphate. It functions in the pathway cofactor biosynthesis; ubiquinone biosynthesis. Catalyzes the prenylation of para-hydroxybenzoate (PHB) with an all-trans polyprenyl group. Mediates the second step in the final reaction sequence of ubiquinone-8 (UQ-8) biosynthesis, which is the condensation of the polyisoprenoid side chain with PHB, generating the first membrane-bound Q intermediate 3-octaprenyl-4-hydroxybenzoate. The polypeptide is 4-hydroxybenzoate octaprenyltransferase (Burkholderia vietnamiensis (strain G4 / LMG 22486) (Burkholderia cepacia (strain R1808))).